Reading from the N-terminus, the 148-residue chain is Ubiquitin-conjugating enzyme E2 30 (148 aa).

In terms of domain architecture, UBC core spans 1–147 (MASKRINKEL…AQSWTQKYAM (147 aa)). Catalysis depends on C85, which acts as the Glycyl thioester intermediate.

Belongs to the ubiquitin-conjugating enzyme family. In terms of assembly, interacts with RGLG3 and RGLG4. Ubiquitously expressed at very low levels.

The enzyme catalyses S-ubiquitinyl-[E1 ubiquitin-activating enzyme]-L-cysteine + [E2 ubiquitin-conjugating enzyme]-L-cysteine = [E1 ubiquitin-activating enzyme]-L-cysteine + S-ubiquitinyl-[E2 ubiquitin-conjugating enzyme]-L-cysteine.. The protein operates within protein modification; protein ubiquitination. In terms of biological role, accepts the ubiquitin from the E1 complex and catalyzes its covalent attachment to other proteins. In Arabidopsis thaliana (Mouse-ear cress), this protein is Ubiquitin-conjugating enzyme E2 30 (UBC30).